Consider the following 263-residue polypeptide: MKKIHPSAVIEEGAQLGDDVVIEAYAYVGKDTKIGNDVIIKQGARILSDTTIGDHSRVFSYAIVGDIPQDISYKEEQKSGVVIGKNATIREFATINSGTAKGDGFTRIGDNAFIMAYCHIAHDCLLGNSIILANNATLAGHVELGDFTVVGGLTPIHQFVKIGEGCMIAGASALSQDIVPFCLAEGNRASIRSLNLVGIRRRFDKDEVDRLSRAFKTLFRQGDLKENAKNLLENQESENIKKMCHFILETKRGIPVYRGKNNA.

The protein belongs to the transferase hexapeptide repeat family. LpxA subfamily. In terms of assembly, homotrimer.

The protein resides in the cytoplasm. The catalysed reaction is a (3R)-hydroxyacyl-[ACP] + UDP-N-acetyl-alpha-D-glucosamine = a UDP-3-O-[(3R)-3-hydroxyacyl]-N-acetyl-alpha-D-glucosamine + holo-[ACP]. Its pathway is glycolipid biosynthesis; lipid IV(A) biosynthesis; lipid IV(A) from (3R)-3-hydroxytetradecanoyl-[acyl-carrier-protein] and UDP-N-acetyl-alpha-D-glucosamine: step 1/6. In terms of biological role, involved in the biosynthesis of lipid A, a phosphorylated glycolipid that anchors the lipopolysaccharide to the outer membrane of the cell. The chain is Acyl-[acyl-carrier-protein]--UDP-N-acetylglucosamine O-acyltransferase from Campylobacter jejuni subsp. doylei (strain ATCC BAA-1458 / RM4099 / 269.97).